The following is an 83-amino-acid chain: RNA-binding protein Hfq (83 aa).

One can recognise a Sm domain in the interval 9–68 (DPYLNALRKERIPVSIFLVNGIKLQGQIESFDQFVILLKNTVSQMVYKHAISTVVPARNV).

This sequence belongs to the Hfq family. In terms of assembly, homohexamer.

In terms of biological role, RNA chaperone that binds small regulatory RNA (sRNAs) and mRNAs to facilitate mRNA translational regulation in response to envelope stress, environmental stress and changes in metabolite concentrations. Also binds with high specificity to tRNAs. This Marinobacter nauticus (strain ATCC 700491 / DSM 11845 / VT8) (Marinobacter aquaeolei) protein is RNA-binding protein Hfq.